We begin with the raw amino-acid sequence, 665 residues long: DNA mismatch repair protein MutL (665 aa).

2 stretches are compositionally biased toward polar residues: residues 348–361 (LEAT…NGLS) and 407–421 (PSSQ…NSRY). Disordered stretches follow at residues 348–370 (LEAT…AEEG) and 385–445 (VHRG…STSA). Low complexity predominate over residues 426–445 (YSTNAASTNTASNYSHSTSA).

Belongs to the DNA mismatch repair MutL/HexB family.

Functionally, this protein is involved in the repair of mismatches in DNA. It is required for dam-dependent methyl-directed DNA mismatch repair. May act as a 'molecular matchmaker', a protein that promotes the formation of a stable complex between two or more DNA-binding proteins in an ATP-dependent manner without itself being part of a final effector complex. This is DNA mismatch repair protein MutL from Shewanella denitrificans (strain OS217 / ATCC BAA-1090 / DSM 15013).